The sequence spans 104 residues: Small ribosomal subunit protein bS18c (104 aa).

The interval 84–104 is disordered; it reads DKQFERSESTPRTIGLRTRNK.

The protein belongs to the bacterial ribosomal protein bS18 family. Part of the 30S ribosomal subunit.

It localises to the plastid. Its subcellular location is the chloroplast. This Cucumis sativus (Cucumber) protein is Small ribosomal subunit protein bS18c.